The primary structure comprises 345 residues: 3-isopropylmalate dehydrogenase (345 aa).

Residues R94, R104, R130, and D215 each coordinate substrate. Mg(2+)-binding residues include D215, D239, and D243. Position 273-285 (273-285 (GSAPDIAGKGIAN)) interacts with NAD(+).

This sequence belongs to the isocitrate and isopropylmalate dehydrogenases family. LeuB type 1 subfamily. As to quaternary structure, homodimer. Mg(2+) is required as a cofactor. Requires Mn(2+) as cofactor.

It localises to the cytoplasm. The enzyme catalyses (2R,3S)-3-isopropylmalate + NAD(+) = 4-methyl-2-oxopentanoate + CO2 + NADH. The protein operates within amino-acid biosynthesis; L-leucine biosynthesis; L-leucine from 3-methyl-2-oxobutanoate: step 3/4. In terms of biological role, catalyzes the oxidation of 3-carboxy-2-hydroxy-4-methylpentanoate (3-isopropylmalate) to 3-carboxy-4-methyl-2-oxopentanoate. The product decarboxylates to 4-methyl-2 oxopentanoate. This is 3-isopropylmalate dehydrogenase (leuB) from Lactococcus lactis subsp. lactis (strain IL1403) (Streptococcus lactis).